The following is a 578-amino-acid chain: Arginine--tRNA ligase (578 aa).

Positions 127–137 (PNLAKEMHVGH) match the 'HIGH' region motif.

Belongs to the class-I aminoacyl-tRNA synthetase family. In terms of assembly, monomer.

The protein localises to the cytoplasm. The catalysed reaction is tRNA(Arg) + L-arginine + ATP = L-arginyl-tRNA(Arg) + AMP + diphosphate. This Pseudomonas putida (strain ATCC 47054 / DSM 6125 / CFBP 8728 / NCIMB 11950 / KT2440) protein is Arginine--tRNA ligase.